The primary structure comprises 750 residues: Photosystem I P700 chlorophyll a apoprotein A1 (750 aa).

8 helical membrane passes run 70 to 93 (VFSA…FHGA), 156 to 179 (LYCT…FHYH), 195 to 219 (LNHH…HVSL), 291 to 309 (IAHH…GHMY), 346 to 369 (WHAQ…HHMY), 385 to 411 (LSLF…IFMV), 433 to 455 (AIIS…LYIH), and 531 to 549 (FLVH…LILL). Positions 573 and 582 each coordinate [4Fe-4S] cluster. Helical transmembrane passes span 589–610 (HVFL…HFSW) and 664–686 (LSAY…MFLF). H675 is a chlorophyll a' binding site. M683 and Y691 together coordinate chlorophyll a. Phylloquinone is bound at residue W692. Residues 724–744 (AVGVTHYLLGGIATTWAFFLA) traverse the membrane as a helical segment.

This sequence belongs to the PsaA/PsaB family. As to quaternary structure, the PsaA/B heterodimer binds the P700 chlorophyll special pair and subsequent electron acceptors. PSI consists of a core antenna complex that captures photons, and an electron transfer chain that converts photonic excitation into a charge separation. The eukaryotic PSI reaction center is composed of at least 11 subunits. The cofactor is P700 is a chlorophyll a/chlorophyll a' dimer, A0 is one or more chlorophyll a, A1 is one or both phylloquinones and FX is a shared 4Fe-4S iron-sulfur center..

The protein localises to the plastid. It localises to the chloroplast thylakoid membrane. The catalysed reaction is reduced [plastocyanin] + hnu + oxidized [2Fe-2S]-[ferredoxin] = oxidized [plastocyanin] + reduced [2Fe-2S]-[ferredoxin]. Functionally, psaA and PsaB bind P700, the primary electron donor of photosystem I (PSI), as well as the electron acceptors A0, A1 and FX. PSI is a plastocyanin-ferredoxin oxidoreductase, converting photonic excitation into a charge separation, which transfers an electron from the donor P700 chlorophyll pair to the spectroscopically characterized acceptors A0, A1, FX, FA and FB in turn. Oxidized P700 is reduced on the lumenal side of the thylakoid membrane by plastocyanin. The polypeptide is Photosystem I P700 chlorophyll a apoprotein A1 (Arabidopsis thaliana (Mouse-ear cress)).